A 192-amino-acid polypeptide reads, in one-letter code: Xanthine phosphoribosyltransferase (192 aa).

Residues L20 and N27 each coordinate xanthine. Residue 128–132 coordinates 5-phospho-alpha-D-ribose 1-diphosphate; the sequence is AHGEA. K156 lines the xanthine pocket.

Belongs to the purine/pyrimidine phosphoribosyltransferase family. Xpt subfamily. In terms of assembly, homodimer.

Its subcellular location is the cytoplasm. It carries out the reaction XMP + diphosphate = xanthine + 5-phospho-alpha-D-ribose 1-diphosphate. It functions in the pathway purine metabolism; XMP biosynthesis via salvage pathway; XMP from xanthine: step 1/1. Its function is as follows. Converts the preformed base xanthine, a product of nucleic acid breakdown, to xanthosine 5'-monophosphate (XMP), so it can be reused for RNA or DNA synthesis. In Lactobacillus johnsonii (strain CNCM I-12250 / La1 / NCC 533), this protein is Xanthine phosphoribosyltransferase.